The chain runs to 669 residues: UvrABC system protein B (669 aa).

A Helicase ATP-binding domain is found at 26–183; the sequence is EGLEDGLAHQ…RRLADLQYTR (158 aa). An ATP-binding site is contributed by 39-46; that stretch reads GVTGSGKT. The short motif at 92-115 is the Beta-hairpin element; that stretch reads YYDYYQPEAYVPSSDTFIEKDASV. One can recognise a Helicase C-terminal domain in the interval 431–593; it reads QVDDLLSEIR…IVPKGLNKKI (163 aa). One can recognise a UVR domain in the interval 629 to 664; that stretch reads EKEIQRLETEMYQHAKDLEFEKAAQTRDKLQTLRAQ.

Belongs to the UvrB family. As to quaternary structure, forms a heterotetramer with UvrA during the search for lesions. Interacts with UvrC in an incision complex.

It localises to the cytoplasm. The UvrABC repair system catalyzes the recognition and processing of DNA lesions. A damage recognition complex composed of 2 UvrA and 2 UvrB subunits scans DNA for abnormalities. Upon binding of the UvrA(2)B(2) complex to a putative damaged site, the DNA wraps around one UvrB monomer. DNA wrap is dependent on ATP binding by UvrB and probably causes local melting of the DNA helix, facilitating insertion of UvrB beta-hairpin between the DNA strands. Then UvrB probes one DNA strand for the presence of a lesion. If a lesion is found the UvrA subunits dissociate and the UvrB-DNA preincision complex is formed. This complex is subsequently bound by UvrC and the second UvrB is released. If no lesion is found, the DNA wraps around the other UvrB subunit that will check the other stand for damage. The sequence is that of UvrABC system protein B from Proteus mirabilis (strain HI4320).